A 244-amino-acid polypeptide reads, in one-letter code: DNA repair protein RecO (244 aa).

Belongs to the RecO family.

In terms of biological role, involved in DNA repair and RecF pathway recombination. This Myxococcus xanthus (strain DK1622) protein is DNA repair protein RecO.